Consider the following 682-residue polypeptide: Potassium-transporting ATPase ATP-binding subunit (682 aa).

Helical transmembrane passes span 34 to 54 (PVMFVVWAGSVLTTLLTLAMV), 58 to 78 (IAGSALFTGIISLWLWFTVLF), 219 to 239 (IALTILLIALTIVFLLATATL), and 254 to 274 (VLVALLVCLIPTTIGGLLSAI). Residue D307 is the 4-aspartylphosphate intermediate of the active site. Residues D344, E348, 377–384 (FTAQSRMS), and K395 contribute to the ATP site. The Mg(2+) site is built by D518 and D522. The next 3 helical transmembrane spans lie at 588-608 (FAIIPAAFAATYPQLNALNVM), 616-636 (AILSAVIFNALIIIFLIPLAL), and 662-682 (LVVPFIGIKVIDVLLTLLGLA).

Belongs to the cation transport ATPase (P-type) (TC 3.A.3) family. Type IA subfamily. The system is composed of three essential subunits: KdpA, KdpB and KdpC.

Its subcellular location is the cell inner membrane. The enzyme catalyses K(+)(out) + ATP + H2O = K(+)(in) + ADP + phosphate + H(+). In terms of biological role, part of the high-affinity ATP-driven potassium transport (or Kdp) system, which catalyzes the hydrolysis of ATP coupled with the electrogenic transport of potassium into the cytoplasm. This subunit is responsible for energy coupling to the transport system and for the release of the potassium ions to the cytoplasm. The sequence is that of Potassium-transporting ATPase ATP-binding subunit from Salmonella newport (strain SL254).